The primary structure comprises 436 residues: Aminopeptidase C (436 aa).

Catalysis depends on residues Cys-68, His-356, and Asn-378.

The protein belongs to the peptidase C1 family. As to quaternary structure, homohexamer.

The catalysed reaction is Inactivates bleomycin B2 (a cytotoxic glycometallopeptide) by hydrolysis of a carboxyamide bond of beta-aminoalanine, but also shows general aminopeptidase activity. The specificity varies somewhat with source, but amino acid arylamides of Met, Leu and Ala are preferred.. Functionally, hydrolyzes naphthylamide-substituted amino acids as well as di- and tripeptides in which the half-cystine residue is involved in a disulfide loop, notably in oxytocin and vasopressin. Also has a bleomycin hydrolase activity. This is Aminopeptidase C (pepC) from Lactococcus lactis subsp. cremoris (Streptococcus cremoris).